Reading from the N-terminus, the 122-residue chain is Prefoldin subunit 1 (122 aa).

The protein belongs to the prefoldin subunit beta family. As to quaternary structure, heterohexamer of two PFD-alpha type and four PFD-beta type subunits.

Binds specifically to cytosolic chaperonin (c-CPN) and transfers target proteins to it. Binds to nascent polypeptide chain and promotes folding in an environment in which there are many competing pathways for nonnative proteins. This is Prefoldin subunit 1 (pfdn1) from Tetraodon nigroviridis (Spotted green pufferfish).